The following is a 205-amino-acid chain: H/ACA ribonucleoprotein complex subunit GAR1 (205 aa).

Over residues 1–23 the composition is skewed to gly residues; it reads MSFRGGNRGGRGGFRGGFRGGRT. The disordered stretch occupies residues 1–31; sequence MSFRGGNRGGRGGFRGGFRGGRTGSARSFQQ. At Arg-4 the chain carries Asymmetric dimethylarginine; by HMT1. The interval 4-21 is RGG-box 1; sequence RGGNRGGRGGFRGGFRGG. At Arg-8 the chain carries Asymmetric dimethylarginine; by HMT1; alternate. Arg-8 is modified (omega-N-methylarginine; by HMT1; alternate). Arg-11 carries the asymmetric dimethylarginine; by HMT1 modification. Arg-15 is modified (asymmetric dimethylarginine; by HMT1; alternate). At Arg-15 the chain carries Omega-N-methylarginine; by HMT1; alternate. Arg-19 carries the post-translational modification Asymmetric dimethylarginine; by HMT1. Lys-77 participates in a covalent cross-link: Glycyl lysine isopeptide (Lys-Gly) (interchain with G-Cter in ubiquitin). The interval 124–205 is disordered; that stretch reads PKPKVVGPPK…SRGGFRGGRR (82 aa). Residues 143 to 205 show a composition bias toward gly residues; that stretch reads APGGRGGASM…SRGGFRGGRR (63 aa). Residues Arg-147, Arg-154, and Arg-158 each carry the asymmetric dimethylarginine; by HMT1; alternate modification. 3 positions are modified to omega-N-methylarginine; by HMT1; alternate: Arg-147, Arg-154, and Arg-158. Residues 147–205 are RGG-box 2; that stretch reads RGGASMGRGGSRGGFRGGRGGSSFRGGRGGSSFRGGSRGGSFRGGSRGGSRGGFRGGRR. At Arg-162 the chain carries Asymmetric dimethylarginine; by HMT1. Arg-165 is modified (asymmetric dimethylarginine; by HMT1; alternate). Arg-165 is subject to Omega-N-methylarginine; by HMT1; alternate. An asymmetric dimethylarginine; by HMT1 mark is found at Arg-171 and Arg-174. An omega-N-methylarginine; by HMT1 mark is found at Arg-180 and Arg-184. At Arg-189 the chain carries Asymmetric dimethylarginine; by HMT1; alternate. Residue Arg-189 is modified to Omega-N-methylarginine; by HMT1; alternate. An asymmetric dimethylarginine; by HMT1 mark is found at Arg-193, Arg-197, and Arg-201.

Belongs to the GAR1 family. Component of the small nucleolar ribonucleoprotein particles containing H/ACA-type snoRNAs (H/ACA snoRNPs). The protein component of the H/ACA snoRNP contains CBF5, GAR1, NHP2 and NOP10. The complex contains a stable core composed of CBF5 and NOP10, to which GAR1 and NHP2 subsequently bind. Interacts with snoRNAs. Post-translationally, methylated by HMT1, forming asymmetric dimethylarginines (DMA) within a domain referred to as an RGG box, made up of repeated Gly-Gly dipeptides interspersed with Arg and aromatic residues.

The protein resides in the nucleus. Its subcellular location is the nucleolus. In terms of biological role, non-catalytic component of the H/ACA small nucleolar ribonucleoprotein (H/ACA snoRNP), which catalyzes pseudouridylation of rRNA and is required for ribosome biogenesis. This involves the isomerization of uridine such that the ribose is subsequently attached to C5, instead of the normal N1. Pseudouridine ('psi') residues may serve to stabilize the conformation of rRNAs. The H/ACA snoRNP complex also mediates pseudouridylation of other types of RNAs. The H/ACA snoRNP complex mediates pseudouridylation at position 93 in U2 snRNA. Essential for growth. The polypeptide is H/ACA ribonucleoprotein complex subunit GAR1 (Saccharomyces cerevisiae (strain ATCC 204508 / S288c) (Baker's yeast)).